The sequence spans 295 residues: Acetylglutamate kinase (295 aa).

Substrate is bound by residues 66–67, Arg88, and Asn193; that span reads GG.

It belongs to the acetylglutamate kinase family. ArgB subfamily.

It is found in the cytoplasm. The enzyme catalyses N-acetyl-L-glutamate + ATP = N-acetyl-L-glutamyl 5-phosphate + ADP. It functions in the pathway amino-acid biosynthesis; L-arginine biosynthesis; N(2)-acetyl-L-ornithine from L-glutamate: step 2/4. In terms of biological role, catalyzes the ATP-dependent phosphorylation of N-acetyl-L-glutamate. This chain is Acetylglutamate kinase, found in Allorhizobium ampelinum (strain ATCC BAA-846 / DSM 112012 / S4) (Agrobacterium vitis (strain S4)).